Consider the following 381-residue polypeptide: Probable envelope ADP,ATP carrier protein, chloroplastic (381 aa).

A chloroplast-targeting transit peptide spans 1 to 26 (MEEDRAILTFHRIPSLNSSLITTSSP). 5 helical membrane passes run 78–98 (LAIL…ALAG), 154–179 (LPQV…NLFK), 191–211 (LAAG…LDVL), 237–257 (IASF…YIAV), and 281–301 (LLTA…LDTV). 3 Solcar repeats span residues 85-177 (PKDA…YKNL), 185-268 (LSVI…VKKS), and 279-359 (SSLL…VKRL). Arginine 159 lines the ADP pocket. Arginine 302 serves as a coordination point for ADP. The helical transmembrane segment at 334–360 (GFLPNALKTLPNSSIRLTTFDMVKRLI) threads the bilayer.

The protein belongs to the mitochondrial carrier (TC 2.A.29) family.

It localises to the plastid. The protein resides in the chloroplast membrane. Its function is as follows. Transports adenine nucleotides. This Arabidopsis thaliana (Mouse-ear cress) protein is Probable envelope ADP,ATP carrier protein, chloroplastic (EAAC).